A 490-amino-acid chain; its full sequence is UDP-N-acetylmuramate--L-alanine ligase (490 aa).

G126–T132 lines the ATP pocket.

The protein belongs to the MurCDEF family.

The protein localises to the cytoplasm. The enzyme catalyses UDP-N-acetyl-alpha-D-muramate + L-alanine + ATP = UDP-N-acetyl-alpha-D-muramoyl-L-alanine + ADP + phosphate + H(+). It participates in cell wall biogenesis; peptidoglycan biosynthesis. In terms of biological role, cell wall formation. The chain is UDP-N-acetylmuramate--L-alanine ligase from Baumannia cicadellinicola subsp. Homalodisca coagulata.